We begin with the raw amino-acid sequence, 192 residues long: Putative molybdenum cofactor guanylyltransferase (192 aa).

Residues leucine 8–glycine 10, lysine 21, aspartate 67, and aspartate 101 contribute to the GTP site. Position 101 (aspartate 101) interacts with Mg(2+).

It belongs to the MobA family. Monomer. The cofactor is Mg(2+).

The protein localises to the cytoplasm. The enzyme catalyses Mo-molybdopterin + GTP + H(+) = Mo-molybdopterin guanine dinucleotide + diphosphate. Transfers a GMP moiety from GTP to Mo-molybdopterin (Mo-MPT) cofactor (Moco or molybdenum cofactor) to form Mo-molybdopterin guanine dinucleotide (Mo-MGD) cofactor. The sequence is that of Putative molybdenum cofactor guanylyltransferase from Neisseria meningitidis serogroup B (strain ATCC BAA-335 / MC58).